The sequence spans 233 residues: Biosynthetic peptidoglycan transglycosylase (233 aa).

Residues 17-37 form a helical membrane-spanning segment; the sequence is IVLAVLALVVLPYVLIFFYLL.

The protein belongs to the glycosyltransferase 51 family.

It localises to the cell inner membrane. The enzyme catalyses [GlcNAc-(1-&gt;4)-Mur2Ac(oyl-L-Ala-gamma-D-Glu-L-Lys-D-Ala-D-Ala)](n)-di-trans,octa-cis-undecaprenyl diphosphate + beta-D-GlcNAc-(1-&gt;4)-Mur2Ac(oyl-L-Ala-gamma-D-Glu-L-Lys-D-Ala-D-Ala)-di-trans,octa-cis-undecaprenyl diphosphate = [GlcNAc-(1-&gt;4)-Mur2Ac(oyl-L-Ala-gamma-D-Glu-L-Lys-D-Ala-D-Ala)](n+1)-di-trans,octa-cis-undecaprenyl diphosphate + di-trans,octa-cis-undecaprenyl diphosphate + H(+). It functions in the pathway cell wall biogenesis; peptidoglycan biosynthesis. Peptidoglycan polymerase that catalyzes glycan chain elongation from lipid-linked precursors. This is Biosynthetic peptidoglycan transglycosylase from Rhizobium etli (strain ATCC 51251 / DSM 11541 / JCM 21823 / NBRC 15573 / CFN 42).